The sequence spans 93 residues: UPF0337 protein Bd3330 (93 aa).

The protein belongs to the UPF0337 (CsbD) family.

This chain is UPF0337 protein Bd3330, found in Bdellovibrio bacteriovorus (strain ATCC 15356 / DSM 50701 / NCIMB 9529 / HD100).